Reading from the N-terminus, the 533-residue chain is Calcitonin receptor (533 aa).

A signal peptide spans Met1–Gln41. The Extracellular segment spans residues Ala42–Tyr163. N-linked (GlcNAc...) asparagine glycosylation is found at Asn45, Asn90, Asn142, and Asn147. 3 cysteine pairs are disulfide-bonded: Cys72-Cys98, Cys89-Cys129, and Cys112-Cys151. Residues Val164 to Ile186 traverse the membrane as a helical segment. Topologically, residues Phe187 to Val198 are cytoplasmic. The helical transmembrane segment at Thr199–Leu219 threads the bilayer. Residues Val220–Cys273 lie on the Extracellular side of the membrane. Cys273 and Cys343 are disulfide-bonded. The chain crosses the membrane as a helical span at residues Lys274–Ile296. The Cytoplasmic segment spans residues Tyr297–Leu313. A helical transmembrane segment spans residues Arg314–Thr334. At Arg335 to His350 the chain is on the extracellular side. Residues Leu351 to Val374 form a helical membrane-spanning segment. Residues Arg375–Lys394 lie on the Cytoplasmic side of the membrane. A helical membrane pass occupies residues Ala395–Phe413. The Extracellular portion of the chain corresponds to Pro414–Val421. The helical transmembrane segment at Leu422 to Cys448 threads the bilayer. The Cytoplasmic portion of the chain corresponds to Asn449–Ala533.

Belongs to the G-protein coupled receptor 2 family. Heterodimer of CALCR and RAMP1, RAMP2 or RAMP3; the receptor complexes function as AMYR1, AMYR2 and AMYR3 receptors, respectively, and respond to amylin/IAPP, calcitonin/CT and CGRP1 ligands. Interacts with GPRASP2.

The protein localises to the cell membrane. G protein-coupled receptor activated by ligand peptides amylin (IAPP), calcitonin (CT/CALCA) and calcitonin gene-related peptide type 1 (CGRP1/CALCA). CALCR interacts with receptor-activity-modifying proteins RAMP1, 2 and 3 to form receptor complexes AMYR1, 2 and 3, respectively. IAPP, CT and CGRP1 activate CALCR and AMYRs with distinct modes of receptor activation resulting in specific phenotypes. Ligand binding causes a conformation change that triggers signaling via guanine nucleotide-binding proteins (G proteins) and modulates the activity of downstream effectors. Activates cAMP-dependent pathway. The polypeptide is Calcitonin receptor (Mus musculus (Mouse)).